Reading from the N-terminus, the 60-residue chain is UPF0434 protein Dtpsy_1553 (60 aa).

It belongs to the UPF0434 family.

The protein is UPF0434 protein Dtpsy_1553 of Acidovorax ebreus (strain TPSY) (Diaphorobacter sp. (strain TPSY)).